The sequence spans 338 residues: Phospho-2-dehydro-3-deoxyheptonate aldolase (338 aa).

This sequence belongs to the class-I DAHP synthase family. Homotetramer. Requires a divalent metal cation as cofactor.

It carries out the reaction D-erythrose 4-phosphate + phosphoenolpyruvate + H2O = 7-phospho-2-dehydro-3-deoxy-D-arabino-heptonate + phosphate. It functions in the pathway metabolic intermediate biosynthesis; chorismate biosynthesis; chorismate from D-erythrose 4-phosphate and phosphoenolpyruvate: step 1/7. Inhibited by L-phenylalanine and L-tyrosine. Its function is as follows. Catalyzes the condensation of phosphoenolpyruvate (PEP) and D-erythrose-4-phosphate (E4P) giving rise to 3-deoxy-D-arabino-heptulosonate-7-phosphate (DAHP). The protein is Phospho-2-dehydro-3-deoxyheptonate aldolase (aroF) of Thermotoga maritima (strain ATCC 43589 / DSM 3109 / JCM 10099 / NBRC 100826 / MSB8).